The chain runs to 89 residues: DNA/RNA-binding protein Alba 2 (89 aa).

K12 carries the post-translational modification N6-acetyllysine. Positions 14, 18, and 22 each coordinate Zn(2+).

It belongs to the histone-like Alba family. Forms homodimers and homotetramers. Homodimer at pH below 6.0. Forms homotetramers and higher order homooligomers at near the growth temperature of 80 degrees Celsius and pH 7.0. Interacts with Alba 1; heterodimers lack cooperative DNA-binding behavior and result in more compact chromatin structures compared to Alba 1 homodimers. Acetylated. Acetylation at Lys-12 decreases DNA-binding affinity.

It is found in the cytoplasm. It localises to the chromosome. In terms of biological role, binds single-stranded DNA, RNA and double-stranded DNA. Involved in DNA compaction. The chain is DNA/RNA-binding protein Alba 2 from Saccharolobus solfataricus (strain ATCC 35092 / DSM 1617 / JCM 11322 / P2) (Sulfolobus solfataricus).